A 234-amino-acid chain; its full sequence is ATP-dependent dethiobiotin synthetase BioD (234 aa).

12 to 17 (DVGKTF) lines the ATP pocket. A Mg(2+)-binding site is contributed by Thr-16. Residue Lys-37 is part of the active site. Ser-41 is a substrate binding site. ATP is bound by residues Asp-52, 118-121 (EGAG), and 178-179 (SQ). Positions 52 and 118 each coordinate Mg(2+).

Belongs to the dethiobiotin synthetase family. As to quaternary structure, homodimer. Requires Mg(2+) as cofactor.

Its subcellular location is the cytoplasm. The catalysed reaction is (7R,8S)-7,8-diammoniononanoate + CO2 + ATP = (4R,5S)-dethiobiotin + ADP + phosphate + 3 H(+). The protein operates within cofactor biosynthesis; biotin biosynthesis; biotin from 7,8-diaminononanoate: step 1/2. Its function is as follows. Catalyzes a mechanistically unusual reaction, the ATP-dependent insertion of CO2 between the N7 and N8 nitrogen atoms of 7,8-diaminopelargonic acid (DAPA, also called 7,8-diammoniononanoate) to form a ureido ring. This chain is ATP-dependent dethiobiotin synthetase BioD, found in Phenylobacterium zucineum (strain HLK1).